Reading from the N-terminus, the 625-residue chain is Glucokinase regulatory protein (625 aa).

SIS domains lie at 90–286 (VQEV…QGIA) and 320–499 (VSTS…LLGK). Beta-D-fructose 1-phosphate-binding positions include 109–110 (TS), Glu153, and 179–181 (SVG). 109-110 (TS) provides a ligand contact to beta-D-fructose 6-phosphate. Residue 179 to 181 (SVG) coordinates beta-D-fructose 6-phosphate. An important for interaction with GCK region spans residues 199–200 (AV). Glu348 provides a ligand contact to beta-D-fructose 1-phosphate. Residues 463 to 465 (LLF) are essential for interaction with GCK. Lys514 lines the beta-D-fructose 1-phosphate pocket. A beta-D-fructose 6-phosphate-binding site is contributed by Lys514.

This sequence belongs to the GCKR family. As to quaternary structure, interacts (fructose 6-phosphate bound form) with GCK. Found in liver and pancreas. Not detected in muscle, brain, heart, thymus, intestine, uterus, adipose tissue, kidney, adrenal, lung or spleen.

The protein resides in the cytoplasm. It is found in the nucleus. It localises to the mitochondrion. Regulates glucokinase (GCK) by forming an inactive complex with this enzyme. Acts by promoting GCK recruitment to the nucleus, possibly to provide a reserve of GCK that can be quickly released in the cytoplasm after a meal. The affinity of GCKR for GCK is modulated by fructose metabolites: GCKR with bound fructose 6-phosphate has increased affinity for GCK, while GCKR with bound fructose 1-phosphate has strongly decreased affinity for GCK and does not inhibit GCK activity. The polypeptide is Glucokinase regulatory protein (Homo sapiens (Human)).